A 130-amino-acid polypeptide reads, in one-letter code: Small ribosomal subunit protein uS9 (130 aa).

This sequence belongs to the universal ribosomal protein uS9 family.

This Marinobacter nauticus (strain ATCC 700491 / DSM 11845 / VT8) (Marinobacter aquaeolei) protein is Small ribosomal subunit protein uS9.